Here is a 400-residue protein sequence, read N- to C-terminus: Methylthioribose kinase (400 aa).

Residues Asn40, Lys57, and 111-113 each bind ATP; that span reads EDL. Position 229 (Asp229) interacts with substrate. Position 246 to 248 (246 to 248) interacts with ATP; the sequence is DAE. Residue Arg344 participates in substrate binding.

This sequence belongs to the methylthioribose kinase family. As to quaternary structure, homodimer.

It catalyses the reaction 5-(methylsulfanyl)-D-ribose + ATP = 5-(methylsulfanyl)-alpha-D-ribose 1-phosphate + ADP + H(+). It functions in the pathway amino-acid biosynthesis; L-methionine biosynthesis via salvage pathway; S-methyl-5-thio-alpha-D-ribose 1-phosphate from S-methyl-5'-thioadenosine (hydrolase route): step 2/2. Catalyzes the phosphorylation of methylthioribose into methylthioribose-1-phosphate. The sequence is that of Methylthioribose kinase from Pectobacterium carotovorum subsp. carotovorum (strain PC1).